A 507-amino-acid chain; its full sequence is ATP synthase subunit alpha, chloroplastic (507 aa).

170–177 contacts ATP; sequence GDRQTGKT. A Phosphothreonine modification is found at Thr257.

It belongs to the ATPase alpha/beta chains family. As to quaternary structure, F-type ATPases have 2 components, CF(1) - the catalytic core - and CF(0) - the membrane proton channel. CF(1) has five subunits: alpha(3), beta(3), gamma(1), delta(1), epsilon(1). CF(0) has four main subunits: a, b, b' and c.

The protein localises to the plastid. Its subcellular location is the chloroplast thylakoid membrane. The enzyme catalyses ATP + H2O + 4 H(+)(in) = ADP + phosphate + 5 H(+)(out). Functionally, produces ATP from ADP in the presence of a proton gradient across the membrane. The alpha chain is a regulatory subunit. The protein is ATP synthase subunit alpha, chloroplastic of Lepidium virginicum (Virginia pepperweed).